Reading from the N-terminus, the 265-residue chain is Putative Tubby-like protein 4 (265 aa).

An F-box domain is found at 1–44; the sequence is MPPELLRDVLMRIERSEDTWPSRKNVVSCVGVCKNWRQIFKEIV. In terms of domain architecture, FBD spans 228-250; that stretch reads SYELKLALYFAKNSAILKKFVLR.

Belongs to the TUB family.

The polypeptide is Putative Tubby-like protein 4 (Arabidopsis thaliana (Mouse-ear cress)).